The chain runs to 438 residues: Histidine--tRNA ligase (438 aa).

The protein belongs to the class-II aminoacyl-tRNA synthetase family. Homodimer.

It localises to the cytoplasm. The enzyme catalyses tRNA(His) + L-histidine + ATP = L-histidyl-tRNA(His) + AMP + diphosphate + H(+). In Blochmanniella pennsylvanica (strain BPEN), this protein is Histidine--tRNA ligase.